The primary structure comprises 639 residues: Chaperone protein DnaK 1 (639 aa).

At Thr-199 the chain carries Phosphothreonine; by autocatalysis. Residues 603–612 are compositionally biased toward low complexity; sequence QQQAQAQQAP. The tract at residues 603-639 is disordered; the sequence is QQQAQAQQAPGGEGEQEAKQDDNVVDAEFEEVKDEKK. Acidic residues predominate over residues 625 to 639; the sequence is NVVDAEFEEVKDEKK.

This sequence belongs to the heat shock protein 70 family.

Its function is as follows. Acts as a chaperone. The chain is Chaperone protein DnaK 1 from Photobacterium profundum (strain SS9).